The chain runs to 194 residues: Cyclin-dependent kinase inhibitor 4 (194 aa).

The span at 49 to 58 shows a compositional bias: basic and acidic residues; sequence LELRSRRLEK. 2 disordered regions span residues 49–70 and 107–139; these read LELR…PRRR and TRET…SHCK.

This sequence belongs to the CDI family. ICK/KRP subfamily.

The protein is Cyclin-dependent kinase inhibitor 4 (KRP4) of Oryza sativa subsp. japonica (Rice).